A 29-amino-acid chain; its full sequence is Glucagon (29 aa).

Belongs to the glucagon family.

The protein localises to the secreted. In terms of biological role, glucagon plays a key role in glucose metabolism and homeostasis. Regulates blood glucose by increasing gluconeogenesis and decreasing glycolysis. The protein is Glucagon (GCG) of Struthio camelus (Common ostrich).